A 368-amino-acid chain; its full sequence is Peptide chain release factor 2 (368 aa).

N5-methylglutamine is present on glutamine 251.

Belongs to the prokaryotic/mitochondrial release factor family. Methylated by PrmC. Methylation increases the termination efficiency of RF2.

The protein resides in the cytoplasm. In terms of biological role, peptide chain release factor 2 directs the termination of translation in response to the peptide chain termination codons UGA and UAA. The polypeptide is Peptide chain release factor 2 (Streptomyces avermitilis (strain ATCC 31267 / DSM 46492 / JCM 5070 / NBRC 14893 / NCIMB 12804 / NRRL 8165 / MA-4680)).